A 252-amino-acid polypeptide reads, in one-letter code: Thiamine thiazole synthase (252 aa).

NAD(+) contacts are provided by residues Ser35, 54 to 55 (EK), Gly62, Val126, and 152 to 154 (HVD). 2 residues coordinate Fe cation: Asp154 and His169. Position 217 (Met217) interacts with NAD(+). Arg227 serves as a coordination point for glycine.

The protein belongs to the THI4 family. As to quaternary structure, homooctamer; tetramer of dimers. Fe(2+) is required as a cofactor.

It carries out the reaction hydrogen sulfide + glycine + NAD(+) = ADP-5-ethyl-4-methylthiazole-2-carboxylate + nicotinamide + 3 H2O + H(+). It functions in the pathway cofactor biosynthesis; thiamine diphosphate biosynthesis. Functionally, involved in the biosynthesis of the thiazole moiety of thiamine. Catalyzes the conversion of NAD and glycine to adenosine diphosphate 5-(2-hydroxyethyl)-4-methylthiazole-2-carboxylate (ADT), an adenylated thiazole intermediate, using free sulfide as a source of sulfur. The protein is Thiamine thiazole synthase of Pyrococcus furiosus (strain ATCC 43587 / DSM 3638 / JCM 8422 / Vc1).